The following is a 54-amino-acid chain: Ovomucoid (54 aa).

Residues 4–54 form the Kazal-like domain; it reads VDCSEYPKPVCSPEYMPLCGSDSKTYNNKCDFCSAVVESNGTLTLGHFGKC. 3 cysteine pairs are disulfide-bonded: cysteine 6-cysteine 36, cysteine 14-cysteine 33, and cysteine 22-cysteine 54. A glycan (N-linked (GlcNAc...) asparagine) is linked at asparagine 43.

The protein localises to the secreted. In Casuarius casuarius (Southern cassowary), this protein is Ovomucoid.